Reading from the N-terminus, the 102-residue chain is NADH-quinone oxidoreductase subunit K (102 aa).

The next 3 helical transmembrane spans lie at 6 to 26 (LEHG…GLMV), 30 to 50 (ILFV…AFVV), and 62 to 82 (VMFI…LAIL).

Belongs to the complex I subunit 4L family. As to quaternary structure, NDH-1 is composed of 13 different subunits. Subunits NuoA, H, J, K, L, M, N constitute the membrane sector of the complex.

The protein localises to the cell inner membrane. The catalysed reaction is a quinone + NADH + 5 H(+)(in) = a quinol + NAD(+) + 4 H(+)(out). NDH-1 shuttles electrons from NADH, via FMN and iron-sulfur (Fe-S) centers, to quinones in the respiratory chain. The immediate electron acceptor for the enzyme in this species is believed to be ubiquinone. Couples the redox reaction to proton translocation (for every two electrons transferred, four hydrogen ions are translocated across the cytoplasmic membrane), and thus conserves the redox energy in a proton gradient. The polypeptide is NADH-quinone oxidoreductase subunit K (Pseudomonas aeruginosa (strain LESB58)).